The chain runs to 556 residues: (6-4)DNA photolyase (556 aa).

In terms of domain architecture, Photolyase/cryptochrome alpha/beta spans 24–162 (SGSLIWFRKG…EVFSPVSHTL (139 aa)). Glu-262 serves as a coordination point for phosphate. FAD is bound by residues Lys-263, 276 to 280 (TTVMS), 317 to 321 (QLLWR), 380 to 383 (WMHH), Arg-386, 415 to 417 (DSD), and Asn-421. Trp-320 contributes to the DNA binding site. Residues 382–387 (HHLARH) form an interaction with DNA region. Trp-427 is a DNA binding site. Residues 534–556 (LRRKLQKDEHEESKIRNQRPKLK) form a disordered region. The segment covering 539-548 (QKDEHEESKI) has biased composition (basic and acidic residues).

It belongs to the DNA photolyase class-1 family. Requires FAD as cofactor. Expressed in siliques, flowers and leaves. Not detected in roots.

The enzyme catalyses (6-4) photoproduct (in DNA) = 2 pyrimidine residues (in DNA).. Involved in repair of UV radiation-induced DNA damage. Catalyzes the photoreactivation of pyrimidine [6-4] pyrimidone photoproduct (6-4 products). Binds specifically to DNA containing 6-4 products and repairs these lesions in a visible light-dependent manner. Not required for repair of cyclobutane pyrimidine dimer (CPD). The chain is (6-4)DNA photolyase (UVR3) from Arabidopsis thaliana (Mouse-ear cress).